The sequence spans 34 residues: Jingzhaotoxin F7-10.36 (34 aa).

3 disulfides stabilise this stretch: C2-C17, C9-C22, and C16-C29.

It belongs to the neurotoxin 10 (Hwtx-1) family. 50 (Jztz-F7) subfamily. In terms of tissue distribution, expressed by the venom gland.

Its subcellular location is the secreted. Its function is as follows. Probable ion channel inhibitor. This Chilobrachys guangxiensis (Chinese earth tiger tarantula) protein is Jingzhaotoxin F7-10.36.